Here is a 327-residue protein sequence, read N- to C-terminus: Gonadotropin-releasing hormone receptor (327 aa).

Residues M1 to R38 are Extracellular-facing. 2 N-linked (GlcNAc...) asparagine glycosylation sites follow: N4 and N18. The chain crosses the membrane as a helical span at residues V39–V58. Residues K59–K77 lie on the Cytoplasmic side of the membrane. Residues V78 to L97 traverse the membrane as a helical segment. Residues D98–K115 are Extracellular-facing. The N-linked (GlcNAc...) asparagine glycan is linked to N102. C114 and C195 form a disulfide bridge. A helical membrane pass occupies residues V116–L137. The Cytoplasmic portion of the chain corresponds to D138–W164. The chain crosses the membrane as a helical span at residues I165 to A184. Topologically, residues D185 to N211 are extracellular. The helical transmembrane segment at F212–A231 threads the bilayer. Residues K232–T280 are Cytoplasmic-facing. Residues P281 to V299 traverse the membrane as a helical segment. Residues S300 to H305 lie on the Extracellular side of the membrane. Residues F306 to F325 traverse the membrane as a helical segment. The Cytoplasmic portion of the chain corresponds to S326–L327.

This sequence belongs to the G-protein coupled receptor 1 family.

It is found in the cell membrane. Functionally, receptor for gonadotropin releasing hormone (GnRH) that mediates the action of GnRH to stimulate the secretion of the gonadotropic hormones luteinizing hormone (LH) and follicle-stimulating hormone (FSH). This receptor mediates its action by association with G-proteins that activate a phosphatidylinositol-calcium second messenger system. The sequence is that of Gonadotropin-releasing hormone receptor (Gnrhr) from Rattus norvegicus (Rat).